Reading from the N-terminus, the 720-residue chain is MIYQGETLSVRYLDDGIAELNLNAPGAVNKFDLKTLECLNEALNALYQQSDLKGLLITSDKDAFIVGADITEFLGLFAKPAEELSQWLTRANDIFNKLEDLPVPTLSAINGHALGGGCECVLATDFRLADITARIGLPETRLGIMPGFGGTVRLPRLLGADSAMEIITAGKDKKAQDALKLGLVDAVVAPTALKDAALSMIKDAIAGKLDWQKRRAQKKAPLTLNKIEATMSFTMAKAMVAQVAGKHYPAPMTAVIAIEAAARMSRDEALVVENKHFITLAKTDVAQSLVGIFLNDQYIKGKAKKAAKEGQPTKKGVVLGAGIMGGGIAYQSALKGVPVLMKDIAVPSLDLGMAEAAKLLNKQLERGRIDGVKMAKVLSGITPSLHYAGAEDADIVVEAVVENPKIKAAVLAEVESNVSDTTVIASNTSTIPINLLAQSLKRPENFCGMHFFNPVHRMPLVEIIRGEHTSEETISRVVAYAAKMGKSPIVVNDCPGFFVNRVLFPYFAGFSLLLRDGADFTQVDKVMEKQFGWPMGPAYLLDVVGIDTAHHAQAVMAEGFPDRMGKNYKDAVDVMFEQQRFGQKNGNGFFAYSVDRRGKPKKNVDPAVAELLAPVLGAATDFTSDEIIARMMIPMINEVVRCLEECIIATPAEADMALVYGLGFPPFRGGVFRYIDTLGLAEYVAMADKFAHLGAVYEVPTGLREKAAKGESYYTQQVNA.

The enoyl-CoA hydratase/isomerase stretch occupies residues Met-1–Ala-189. Asp-296 lines the substrate pocket. Positions Gln-311 to Ala-720 are 3-hydroxyacyl-CoA dehydrogenase. NAD(+)-binding positions include Met-324, Asp-343, Val-400–Glu-402, Lys-407, and Ser-429. The active-site For 3-hydroxyacyl-CoA dehydrogenase activity is His-450. An NAD(+)-binding site is contributed by Asn-453. Residues Asn-500 and Tyr-660 each contribute to the substrate site.

This sequence in the N-terminal section; belongs to the enoyl-CoA hydratase/isomerase family. In the C-terminal section; belongs to the 3-hydroxyacyl-CoA dehydrogenase family. As to quaternary structure, heterotetramer of two alpha chains (FadB) and two beta chains (FadA).

It carries out the reaction a (3S)-3-hydroxyacyl-CoA + NAD(+) = a 3-oxoacyl-CoA + NADH + H(+). It catalyses the reaction a (3S)-3-hydroxyacyl-CoA = a (2E)-enoyl-CoA + H2O. The enzyme catalyses a 4-saturated-(3S)-3-hydroxyacyl-CoA = a (3E)-enoyl-CoA + H2O. The catalysed reaction is (3S)-3-hydroxybutanoyl-CoA = (3R)-3-hydroxybutanoyl-CoA. It carries out the reaction a (3Z)-enoyl-CoA = a 4-saturated (2E)-enoyl-CoA. It catalyses the reaction a (3E)-enoyl-CoA = a 4-saturated (2E)-enoyl-CoA. The protein operates within lipid metabolism; fatty acid beta-oxidation. Involved in the aerobic and anaerobic degradation of long-chain fatty acids via beta-oxidation cycle. Catalyzes the formation of 3-oxoacyl-CoA from enoyl-CoA via L-3-hydroxyacyl-CoA. It can also use D-3-hydroxyacyl-CoA and cis-3-enoyl-CoA as substrate. The sequence is that of Fatty acid oxidation complex subunit alpha from Photobacterium profundum (strain SS9).